The chain runs to 170 residues: Adenine phosphoribosyltransferase (170 aa).

This sequence belongs to the purine/pyrimidine phosphoribosyltransferase family. In terms of assembly, homodimer.

It localises to the cytoplasm. It catalyses the reaction AMP + diphosphate = 5-phospho-alpha-D-ribose 1-diphosphate + adenine. Its pathway is purine metabolism; AMP biosynthesis via salvage pathway; AMP from adenine: step 1/1. In terms of biological role, catalyzes a salvage reaction resulting in the formation of AMP, that is energically less costly than de novo synthesis. The chain is Adenine phosphoribosyltransferase from Halothermothrix orenii (strain H 168 / OCM 544 / DSM 9562).